The chain runs to 1456 residues: Alpha-2-macroglobulin-like protein 1 (1456 aa).

The N-terminal stretch at 1–19 is a signal peptide; the sequence is MVPTILLSALLLHFTDVVA. Residues Asn-48, Asn-172, and Asn-868 are each glycosylated (N-linked (GlcNAc...) asparagine).

Belongs to the protease inhibitor I39 (alpha-2-macroglobulin) family. As to quaternary structure, homotetramer; consists of two dimer pairs that are disulfide-linked. Part of a complex composed of complement component C3, CLCA1/CLCA3, A2ML1/OH and ALB/serum albumin.

It localises to the secreted. Its function is as follows. Inhibits protease gelatinolytic complex activity against type 1 collagen. This Mus musculus (Mouse) protein is Alpha-2-macroglobulin-like protein 1.